The sequence spans 269 residues: tRNA pseudouridine synthase A (269 aa).

The active-site Nucleophile is aspartate 51. Tyrosine 109 provides a ligand contact to substrate.

Belongs to the tRNA pseudouridine synthase TruA family. As to quaternary structure, homodimer.

The catalysed reaction is uridine(38/39/40) in tRNA = pseudouridine(38/39/40) in tRNA. In terms of biological role, formation of pseudouridine at positions 38, 39 and 40 in the anticodon stem and loop of transfer RNAs. This is tRNA pseudouridine synthase A from Aeromonas salmonicida (strain A449).